A 488-amino-acid chain; its full sequence is Elongation factor Tu, chloroplastic (488 aa).

Positions 1 to 20 (MALSSTAATTSSKLKLSNPP) are disordered. The transit peptide at 1–79 (MALSSTAATT…RPSSSPFTVR (79 aa)) directs the protein to the chloroplast. Residues 89–293 (KPHLNIGTIG…EVDKYIPIPQ (205 aa)) enclose the tr-type G domain. Positions 98–105 (GHVDHGKT) are G1. Residue 98-105 (GHVDHGKT) participates in GTP binding. The interval 139–143 (GITIN) is G2. The G3 stretch occupies residues 160 to 163 (DCPG). Residues 160–164 (DCPGH) and 215–218 (NKQD) each bind GTP. The interval 215–218 (NKQD) is G4. Residues 253–255 (SAL) are G5.

It belongs to the TRAFAC class translation factor GTPase superfamily. Classic translation factor GTPase family. EF-Tu/EF-1A subfamily. As to expression, higher expression in leaves than in roots.

It localises to the plastid. It is found in the chloroplast. Functionally, this protein promotes the GTP-dependent binding of aminoacyl-tRNA to the A-site of ribosomes during protein biosynthesis. In Pisum sativum (Garden pea), this protein is Elongation factor Tu, chloroplastic (tufA).